We begin with the raw amino-acid sequence, 509 residues long: tRNA-2-methylthio-N(6)-dimethylallyladenosine synthase (509 aa).

Polar residues predominate over residues 1–15 (MNEQQRLASQQVNSS). The segment at 1–23 (MNEQQRLASQQVNSSTKKEEKDY) is disordered. Positions 66–184 (RKFYIRTYGC…LPYILKDAMF (119 aa)) constitute an MTTase N-terminal domain. Residues cysteine 75, cysteine 111, cysteine 145, cysteine 221, cysteine 225, and cysteine 228 each contribute to the [4Fe-4S] cluster site. The Radical SAM core domain occupies 207–437 (RRGDIKAWVN…NALVNKLAIE (231 aa)). The region spanning 440-503 (DRYKGQIVEV…TWSLNGELVE (64 aa)) is the TRAM domain.

Belongs to the methylthiotransferase family. MiaB subfamily. In terms of assembly, monomer. It depends on [4Fe-4S] cluster as a cofactor.

The protein resides in the cytoplasm. The catalysed reaction is N(6)-dimethylallyladenosine(37) in tRNA + (sulfur carrier)-SH + AH2 + 2 S-adenosyl-L-methionine = 2-methylsulfanyl-N(6)-dimethylallyladenosine(37) in tRNA + (sulfur carrier)-H + 5'-deoxyadenosine + L-methionine + A + S-adenosyl-L-homocysteine + 2 H(+). Functionally, catalyzes the methylthiolation of N6-(dimethylallyl)adenosine (i(6)A), leading to the formation of 2-methylthio-N6-(dimethylallyl)adenosine (ms(2)i(6)A) at position 37 in tRNAs that read codons beginning with uridine. The protein is tRNA-2-methylthio-N(6)-dimethylallyladenosine synthase of Bacillus anthracis.